The chain runs to 96 residues: MRKYEVMIIIDPTVEERQVDSLMEKYLKVITDEKGTVDNVDVWGKRRLAYDIQKKSEGIYVVVNATCEPATIQELDRLLAIDEKIMRTKVMRPEIH.

The protein belongs to the bacterial ribosomal protein bS6 family.

Its function is as follows. Binds together with bS18 to 16S ribosomal RNA. The sequence is that of Small ribosomal subunit protein bS6 from Cutibacterium acnes (strain DSM 16379 / KPA171202) (Propionibacterium acnes).